The following is an 892-amino-acid chain: Alanine--tRNA ligase (892 aa).

Zn(2+) contacts are provided by H596, H600, C700, and H704.

The protein belongs to the class-II aminoacyl-tRNA synthetase family. Requires Zn(2+) as cofactor.

It localises to the cytoplasm. It catalyses the reaction tRNA(Ala) + L-alanine + ATP = L-alanyl-tRNA(Ala) + AMP + diphosphate. In terms of biological role, catalyzes the attachment of alanine to tRNA(Ala) in a two-step reaction: alanine is first activated by ATP to form Ala-AMP and then transferred to the acceptor end of tRNA(Ala). Also edits incorrectly charged Ser-tRNA(Ala) and Gly-tRNA(Ala) via its editing domain. This chain is Alanine--tRNA ligase, found in Methanococcus vannielii (strain ATCC 35089 / DSM 1224 / JCM 13029 / OCM 148 / SB).